Reading from the N-terminus, the 262-residue chain is Short-chain reductase protein NovJ (262 aa).

NADP(+)-binding positions include Gly23–Arg26 and Asp73–Val74. Ser152 serves as a coordination point for substrate. Tyr164 functions as the Proton acceptor in the catalytic mechanism. Residue Tyr164 to Lys168 coordinates NADP(+).

It belongs to the short-chain dehydrogenases/reductases (SDR) family. As to quaternary structure, heterotetramer; the NovJ(2)K(2) heterotetramer is composed of subunits of 2 NovJ and 2 subunits of NovK.

Its pathway is antibiotic biosynthesis; novobiocin biosynthesis. Its function is as follows. Catalytic subunit of the NovJ(2)K(2) heterotetramer that catalyzes the NADPH-dependent reduction of the tyrosyl moiety of L-beta-OH-Tyr-S-NovH intermediate to yield the tethered beta-ketotyrosyl-S-NovH in the novobiocin biosynthesis pathway. Novobiocin is an aminocoumarin family antibiotic that targets bacterial DNA gyrases. The sequence is that of Short-chain reductase protein NovJ (novJ) from Streptomyces niveus (Streptomyces spheroides).